Reading from the N-terminus, the 305-residue chain is Methionyl-tRNA formyltransferase (305 aa).

110–113 serves as a coordination point for (6S)-5,6,7,8-tetrahydrofolate; that stretch reads SLLP.

It belongs to the Fmt family.

It carries out the reaction L-methionyl-tRNA(fMet) + (6R)-10-formyltetrahydrofolate = N-formyl-L-methionyl-tRNA(fMet) + (6S)-5,6,7,8-tetrahydrofolate + H(+). Attaches a formyl group to the free amino group of methionyl-tRNA(fMet). The formyl group appears to play a dual role in the initiator identity of N-formylmethionyl-tRNA by promoting its recognition by IF2 and preventing the misappropriation of this tRNA by the elongation apparatus. This is Methionyl-tRNA formyltransferase from Ureaplasma urealyticum serovar 10 (strain ATCC 33699 / Western).